The following is a 342-amino-acid chain: Phosphate acyltransferase (342 aa).

It belongs to the PlsX family. In terms of assembly, homodimer. Probably interacts with PlsY.

It localises to the cytoplasm. The enzyme catalyses a fatty acyl-[ACP] + phosphate = an acyl phosphate + holo-[ACP]. The protein operates within lipid metabolism; phospholipid metabolism. Catalyzes the reversible formation of acyl-phosphate (acyl-PO(4)) from acyl-[acyl-carrier-protein] (acyl-ACP). This enzyme utilizes acyl-ACP as fatty acyl donor, but not acyl-CoA. This chain is Phosphate acyltransferase, found in Shewanella woodyi (strain ATCC 51908 / MS32).